The sequence spans 390 residues: Succinate--CoA ligase [ADP-forming] subunit beta (390 aa).

One can recognise an ATP-grasp domain in the interval 9–245 (KHLLKKYNIP…TTQEDEHETM (237 aa)). ATP is bound by residues K46, 53–55 (GRG), E99, S102, and E107. Mg(2+) contacts are provided by N200 and D214. Residues N265 and 322-324 (GIV) contribute to the substrate site.

Belongs to the succinate/malate CoA ligase beta subunit family. In terms of assembly, heterotetramer of two alpha and two beta subunits. Mg(2+) is required as a cofactor.

It catalyses the reaction succinate + ATP + CoA = succinyl-CoA + ADP + phosphate. The catalysed reaction is GTP + succinate + CoA = succinyl-CoA + GDP + phosphate. It participates in carbohydrate metabolism; tricarboxylic acid cycle; succinate from succinyl-CoA (ligase route): step 1/1. Its function is as follows. Succinyl-CoA synthetase functions in the citric acid cycle (TCA), coupling the hydrolysis of succinyl-CoA to the synthesis of either ATP or GTP and thus represents the only step of substrate-level phosphorylation in the TCA. The beta subunit provides nucleotide specificity of the enzyme and binds the substrate succinate, while the binding sites for coenzyme A and phosphate are found in the alpha subunit. The polypeptide is Succinate--CoA ligase [ADP-forming] subunit beta (Coxiella burnetii (strain CbuG_Q212) (Coxiella burnetii (strain Q212))).